The following is a 473-amino-acid chain: Fumarate hydratase class II (473 aa).

Residues 104-106 (SGT), 128-131 (HPND), 138-140 (SSN), and Thr186 each bind substrate. His187 (proton donor/acceptor) is an active-site residue. Ser318 is an active-site residue. Substrate is bound by residues Ser319 and 324–326 (KVN).

It belongs to the class-II fumarase/aspartase family. Fumarase subfamily. Homotetramer.

Its subcellular location is the cytoplasm. It catalyses the reaction (S)-malate = fumarate + H2O. The protein operates within carbohydrate metabolism; tricarboxylic acid cycle; (S)-malate from fumarate: step 1/1. In terms of biological role, involved in the TCA cycle. Catalyzes the stereospecific interconversion of fumarate to L-malate. This Corynebacterium glutamicum (strain ATCC 13032 / DSM 20300 / JCM 1318 / BCRC 11384 / CCUG 27702 / LMG 3730 / NBRC 12168 / NCIMB 10025 / NRRL B-2784 / 534) protein is Fumarate hydratase class II.